The primary structure comprises 678 residues: Sulfoquinovosidase (678 aa).

A 6-sulfo-alpha-D-quinovosyldiacylglycerol-binding residues include glutamine 288, arginine 301, valine 302, and tryptophan 304. Catalysis depends on aspartate 405, which acts as the Nucleophile. Glutamate 408 is a catalytic residue. Residue aspartate 472 is the Proton donor of the active site. An a 6-sulfo-alpha-D-quinovosyldiacylglycerol-binding site is contributed by histidine 537.

Belongs to the glycosyl hydrolase 31 family.

It catalyses the reaction a 6-sulfo-alpha-D-quinovosyldiacylglycerol + H2O = 6-sulfo-alpha-D-quinovose + a 1,2-diacyl-sn-glycerol. The enzyme catalyses 3-(6-sulfo-alpha-D-quinovosyl)glycerol + H2O = 6-sulfo-alpha-D-quinovose + glycerol. It participates in glycolipid metabolism. Its activity is regulated as follows. Is inactivated in vitro by the mechanism-based inactivator 5-fluoro-beta-L-idopyranosyl fluoride (5FIdoF) that yields a covalent glycosyl-enzyme complex with the active site nucleophile Asp-405. In terms of biological role, catalyzes the hydrolysis of sulfoquinovosyl diacylglycerides (SQDG) to sulfoquinovose (SQ), which is then degraded by E.coli through the SQ Embden-Meyerhof-Parnas (SQ-EMP) sulfoglycolysis pathway as a source of carbon and sulfur. Therefore, is likely involved in the utilization of the sulfoquinovose headgroup found in ubiquitous plant sulfolipids. Is also able to hydrolyze simple sulfoquinovosides such as sulfoquinovosyl glycerol (SQGro). In vitro, can use the substrate analog para-nitrophenyl alpha-sulfoquinovoside (PNPSQ), but shows no detectable activity toward 4-nitrophenyl alpha-D-glucopyranoside (PNPGlc). Is a retaining glycoside hydrolase, since it forms the alpha anomer of SQ. Also exhibits some alpha-glucosidase activity against alpha-glucosyl fluoride in vitro, although natural substrates, such as alpha-glucobioses are scarcely hydrolyzed. In Escherichia coli (strain K12), this protein is Sulfoquinovosidase.